The chain runs to 616 residues: 2-isopropylmalate synthase (616 aa).

The disordered stretch occupies residues 1–34 (MSPNDAFISAPAKIETPVGPRNEGQPAWNKQRGS). One can recognise a Pyruvate carboxyltransferase domain in the interval 67–341 (PQWCAVDLRD…DPQLDFTDIR (275 aa)). Residues Asp76, His280, His282, and Asn316 each contribute to the Mg(2+) site. The regulatory domain stretch occupies residues 490 to 616 (RTAPVEQIAL…NHEAVLAGGV (127 aa)).

This sequence belongs to the alpha-IPM synthase/homocitrate synthase family. LeuA type 2 subfamily. Homodimer. Requires Mg(2+) as cofactor.

Its subcellular location is the cytoplasm. The enzyme catalyses 3-methyl-2-oxobutanoate + acetyl-CoA + H2O = (2S)-2-isopropylmalate + CoA + H(+). Its pathway is amino-acid biosynthesis; L-leucine biosynthesis; L-leucine from 3-methyl-2-oxobutanoate: step 1/4. Catalyzes the condensation of the acetyl group of acetyl-CoA with 3-methyl-2-oxobutanoate (2-ketoisovalerate) to form 3-carboxy-3-hydroxy-4-methylpentanoate (2-isopropylmalate). The polypeptide is 2-isopropylmalate synthase (Corynebacterium glutamicum (strain R)).